Consider the following 320-residue polypeptide: Cytosolic Fe-S cluster assembly factor NUBP1 (320 aa).

At Met1 the chain carries N-acetylmethionine. [4Fe-4S] cluster contacts are provided by Cys8, Cys22, Cys25, and Cys31. An ATP-binding site is contributed by Gly62 to Ser69. Residues Cys235 and Cys238 each contribute to the [4Fe-4S] cluster site. A Phosphoserine modification is found at Ser319.

This sequence belongs to the Mrp/NBP35 ATP-binding proteins family. NUBP1/NBP35 subfamily. In terms of assembly, heterotetramer of 2 NUBP1 and 2 NUBP2 chains. Interacts with KIFC1. Interacts with the BBS/CCT complex subunit CCT1. It depends on [4Fe-4S] cluster as a cofactor.

Its subcellular location is the cytoplasm. It is found in the nucleus. It localises to the cell projection. The protein localises to the cytoskeleton. The protein resides in the cilium axoneme. Its subcellular location is the cilium basal body. It is found in the microtubule organizing center. It localises to the centrosome. The protein localises to the centriole. Its function is as follows. Component of the cytosolic iron-sulfur (Fe/S) protein assembly (CIA) machinery. Required for maturation of extramitochondrial Fe-S proteins. The NUBP1-NUBP2 heterotetramer forms a Fe-S scaffold complex, mediating the de novo assembly of an Fe-S cluster and its transfer to target apoproteins. Implicated in the regulation of centrosome duplication. Negatively regulates cilium formation and structure. The sequence is that of Cytosolic Fe-S cluster assembly factor NUBP1 from Rattus norvegicus (Rat).